Here is a 246-residue protein sequence, read N- to C-terminus: Flavin-dependent thymidylate synthase (246 aa).

The ThyX domain maps to 17 to 241; it reads VTVELVKHSA…PLTYAAFNTN (225 aa). FAD is bound by residues serine 69, 92-94, and glutamate 101; that span reads RHR. Residues 89 to 92, 101 to 105, and arginine 173 contribute to the dUMP site; these read EFMR and EESGR. The short motif at 92 to 103 is the ThyX motif element; that stretch reads RHRVGWSYNEES. FAD-binding positions include 189–191 and histidine 195; that span reads NAR. Arginine 200 serves as a coordination point for dUMP. The active-site Involved in ionization of N3 of dUMP, leading to its activation is arginine 200.

This sequence belongs to the thymidylate synthase ThyX family. Homotetramer. It depends on FAD as a cofactor.

It carries out the reaction dUMP + (6R)-5,10-methylene-5,6,7,8-tetrahydrofolate + NADPH + H(+) = dTMP + (6S)-5,6,7,8-tetrahydrofolate + NADP(+). It participates in pyrimidine metabolism; dTTP biosynthesis. In terms of biological role, catalyzes the reductive methylation of 2'-deoxyuridine-5'-monophosphate (dUMP) to 2'-deoxythymidine-5'-monophosphate (dTMP) while utilizing 5,10-methylenetetrahydrofolate (mTHF) as the methyl donor, and NADPH and FADH(2) as the reductant. This chain is Flavin-dependent thymidylate synthase, found in Streptomyces avermitilis (strain ATCC 31267 / DSM 46492 / JCM 5070 / NBRC 14893 / NCIMB 12804 / NRRL 8165 / MA-4680).